Here is a 119-residue protein sequence, read N- to C-terminus: MRKRNISLKSKIEIQKIFKEGKLIRFSNLNLKMFYKSNHLVYSRILVTFSKGFRGSVKRNRIRRLFKEAFRKRLELLEGIALDIIFVVSYGKLTLTYFSIESLMKGLVLRCERGIGESK.

This sequence belongs to the RnpA family. In terms of assembly, consists of a catalytic RNA component (M1 or rnpB) and a protein subunit.

It catalyses the reaction Endonucleolytic cleavage of RNA, removing 5'-extranucleotides from tRNA precursor.. Its function is as follows. RNaseP catalyzes the removal of the 5'-leader sequence from pre-tRNA to produce the mature 5'-terminus. It can also cleave other RNA substrates such as 4.5S RNA. The protein component plays an auxiliary but essential role in vivo by binding to the 5'-leader sequence and broadening the substrate specificity of the ribozyme. In Borreliella burgdorferi (strain ATCC 35210 / DSM 4680 / CIP 102532 / B31) (Borrelia burgdorferi), this protein is Ribonuclease P protein component.